The primary structure comprises 1315 residues: Chaoptin (1315 aa).

Residues 1–29 (MGLEFFFKFGYAFLTITLMIMIWMSLARA) form the signal peptide. Asn77 carries N-linked (GlcNAc...) (high mannose) asparagine; alternate glycosylation. N-linked (GlcNAc...) (paucimannose) asparagine; alternate glycosylation occurs at Asn77. LRR repeat units lie at residues 80-101 (KVFM…FLQS), 103-124 (GMYR…AFTG), 128-149 (SLWE…SLRH), 152-173 (KLRH…SFRG), 177-198 (SLQT…SFSG), 201-222 (ILET…VFVD), 226-247 (RLTR…ALGP), 250-271 (SLRT…ETYE), and 279-300 (NLDN…SFKY). Asn267 carries an N-linked (GlcNAc...) (paucimannose) asparagine; alternate glycan. Asn267 is a glycosylation site (N-linked (GlcNAc...) (complex) asparagine; alternate). Asn305 carries N-linked (GlcNAc...) (high mannose) asparagine; alternate glycosylation. Residue Asn305 is glycosylated (N-linked (GlcNAc...) (paucimannose) asparagine; alternate). LRR repeat units lie at residues 326–347 (RIRE…AFDS), 351–372 (SLQI…LFNN), 375–396 (VLRV…ETFN), 401–424 (TLLK…RNMT), 477–498 (GLKR…AFHE), 527–548 (SLQE…SFHF), 551–572 (NLRL…TFQG), 577–598 (KLEE…TFFD), 601–622 (ALRK…AFMN), 625–646 (ELEY…SFQN), 649–670 (KLEI…YFDQ), 676–696 (NLNV…SSWS), 708–729 (NIKI…YFRP), 733–754 (SLTH…VFGN), 757–778 (HLQW…AFKN), 781–802 (QLQL…IFKP), 805–826 (GLRI…LFYN), 828–849 (GMEK…SLSS), 854–875 (TLCE…DLSN), 879–900 (SLRY…VFAT), 903–924 (KLAV…SFMG), 928–948 (SLIK…IRLK), 949–970 (YLRE…LAHN), 973–994 (NLRM…TQAL), 996–1017 (HLRR…SFDG), 1021–1044 (DLEM…DSLP), and 1045–1066 (HLRS…PHLL). An N-linked (GlcNAc...) (high mannose) asparagine glycan is attached at Asn361. An N-linked (GlcNAc...) asparagine glycan is attached at Asn422. An N-linked (GlcNAc...) (high mannose) asparagine glycan is attached at Asn680. A glycan (N-linked (GlcNAc...) (high mannose) asparagine; alternate) is linked at Asn692. An N-linked (GlcNAc...) (paucimannose) asparagine; alternate glycan is attached at Asn692. Asn718 carries N-linked (GlcNAc...) (high mannose) asparagine glycosylation. Asn746 is a glycosylation site (N-linked (GlcNAc...) asparagine). Asn936 carries N-linked (GlcNAc...) (high mannose) asparagine glycosylation. A glycan (N-linked (GlcNAc...) (paucimannose) asparagine) is linked at Asn970. Residue Asn1012 is glycosylated (N-linked (GlcNAc...) (complex) asparagine). N-linked (GlcNAc...) (high mannose) asparagine glycans are attached at residues Asn1122, Asn1152, and Asn1171. The 64-residue stretch at 1211 to 1274 (TDLNCDCDLG…DDLRETRCEN (64 aa)) folds into the LRRCT domain.

This sequence belongs to the chaoptin family. In terms of tissue distribution, expressed in photoreceptor cells and their axons in the adult retina, the ocellus and larval photoreceptor organ.

The protein resides in the cell membrane. In terms of biological role, required for photoreceptor cell morphogenesis. Mediates homophilic cellular adhesion. The sequence is that of Chaoptin (chp) from Drosophila melanogaster (Fruit fly).